The chain runs to 100 residues: NADH-quinone oxidoreductase subunit K (100 aa).

A run of 3 helical transmembrane segments spans residues 4–24 (LQHG…GLVI), 28–48 (LLFM…AFVV), and 60–80 (VMYI…LALL).

Belongs to the complex I subunit 4L family. NDH-1 is composed of 13 different subunits. Subunits NuoA, H, J, K, L, M, N constitute the membrane sector of the complex.

It localises to the cell inner membrane. It catalyses the reaction a quinone + NADH + 5 H(+)(in) = a quinol + NAD(+) + 4 H(+)(out). NDH-1 shuttles electrons from NADH, via FMN and iron-sulfur (Fe-S) centers, to quinones in the respiratory chain. The immediate electron acceptor for the enzyme in this species is believed to be ubiquinone. Couples the redox reaction to proton translocation (for every two electrons transferred, four hydrogen ions are translocated across the cytoplasmic membrane), and thus conserves the redox energy in a proton gradient. The chain is NADH-quinone oxidoreductase subunit K from Shigella boydii serotype 18 (strain CDC 3083-94 / BS512).